Here is a 115-residue protein sequence, read N- to C-terminus: Guanylin (115 aa).

Positions 1–21 are cleaved as a signal peptide; it reads MNAFLLSALCLLGAWAALAGG. Cystine bridges form between cysteine 69-cysteine 82, cysteine 104-cysteine 112, and cysteine 107-cysteine 115.

This sequence belongs to the guanylin family. Highly expressed in ileum and colon. Found in plasma.

It is found in the secreted. Functionally, endogenous activator of intestinal guanylate cyclase. It stimulates this enzyme through the same receptor binding region as the heat-stable enterotoxins. The chain is Guanylin (GUCA2A) from Homo sapiens (Human).